Here is an 86-residue protein sequence, read N- to C-terminus: Neuropeptide-like 3 (86 aa).

The N-terminal stretch at 1-16 (MFKLCVFVALLSLAAA) is a signal peptide. 2 propeptides span residues 17 to 50 (APAPAPAPGLIAPGLVAPGIWGPTVVGSPLVAPQ) and 63 to 75 (AITQVHPSPLLIK). Isoleucine 85 is subject to Isoleucine amide.

Its subcellular location is the secreted. This chain is Neuropeptide-like 3 (Nplp3), found in Drosophila yakuba (Fruit fly).